We begin with the raw amino-acid sequence, 114 residues long: Holo-[acyl-carrier-protein] synthase (114 aa).

Residues D8 and E58 each contribute to the Mg(2+) site.

Belongs to the P-Pant transferase superfamily. AcpS family. The cofactor is Mg(2+).

The protein localises to the cytoplasm. The enzyme catalyses apo-[ACP] + CoA = holo-[ACP] + adenosine 3',5'-bisphosphate + H(+). Functionally, transfers the 4'-phosphopantetheine moiety from coenzyme A to a Ser of acyl-carrier-protein. This chain is Holo-[acyl-carrier-protein] synthase, found in Mycoplasma genitalium (strain ATCC 33530 / DSM 19775 / NCTC 10195 / G37) (Mycoplasmoides genitalium).